Consider the following 180-residue polypeptide: Large ribosomal subunit protein uL6 (180 aa).

It belongs to the universal ribosomal protein uL6 family. As to quaternary structure, part of the 50S ribosomal subunit.

In terms of biological role, this protein binds to the 23S rRNA, and is important in its secondary structure. It is located near the subunit interface in the base of the L7/L12 stalk, and near the tRNA binding site of the peptidyltransferase center. The sequence is that of Large ribosomal subunit protein uL6 from Thermoanaerobacter sp. (strain X514).